A 1403-amino-acid polypeptide reads, in one-letter code: Eukaryotic translation initiation factor 4 gamma (1403 aa).

3 stretches are compositionally biased toward polar residues: residues 1–11 (MSSKPPSNTPK), 19–39 (ASSQSNKSNSTKASENNTATA), and 50–60 (EPTNTSRANAQ). Disordered stretches follow at residues 1-381 (MSSK…GSTP), 439-464 (SRSGSQVSDQVVESPNSSTLSPRNGF), 488-774 (VVVP…KRDL), and 861-1003 (AFSD…EALL). Ser-83 is subject to Phosphoserine. Polar residues predominate over residues 109-137 (DNTSKPSANSSAERTSSQHQKPETSSQIG). Composition is skewed to low complexity over residues 190 to 208 (SGVSSYSSKSQSVNSSVTS) and 231 to 248 (PRPTTSASNTNTSPANGA). Over residues 249 to 269 (PTNKPSTDINTTDPATQTTQV) the composition is skewed to polar residues. A compositionally biased stretch (low complexity) spans 270-291 (SASNSPALSGSSTPSNTSSRSN). Basic and acidic residues predominate over residues 298-308 (FSEKRHYDRYG). The span at 325–334 (NYNNSGNNRN) shows a compositional bias: low complexity. Composition is skewed to polar residues over residues 346 to 381 (RNYNNQGAYPTYMSNGRSANQSPRNNPQNVNNGSTP), 439 to 460 (SRSGSQVSDQVVESPNSSTLSP), and 493 to 508 (KNASSPNPSETNSRAE). 4 positions are modified to phosphoserine: Ser-452, Ser-455, Ser-456, and Ser-459. Residues 537 to 714 (IQEKAEAEAK…GKREADKNPE (178 aa)) are compositionally biased toward basic and acidic residues. Residues 720 to 737 (PLASSEANVDTSKQTNAT) show a composition bias toward polar residues. Positions 741-754 (VVDKTKVEKLKASE) are enriched in basic and acidic residues. Residues 757–768 (STSSLSSPSHST) are compositionally biased toward low complexity. Ser-866 and Ser-882 each carry phosphoserine. Low complexity predominate over residues 868-886 (RGMYSSSRQSSRSGSNTHS). Residue Thr-884 is modified to Phosphothreonine. 4 positions are modified to phosphoserine: Ser-886, Ser-911, Ser-919, and Ser-921. At Tyr-923 the chain carries Phosphotyrosine. The span at 986–995 (KLTEKPAETK) shows a compositional bias: basic and acidic residues. In terms of domain architecture, MIF4G spans 1009–1245 (QRKVKGSLNK…MDVMDSRKNG (237 aa)). Positions 1266 to 1403 (AERKKALAES…QKDSNSKTSS (138 aa)) are disordered. Basic and acidic residues predominate over residues 1284–1295 (HGRDMNRGDSRM). Polar residues-rich tracts occupy residues 1302–1313 (PPFSSSDWSNNK), 1328–1341 (SGTQGSHGPTSLSS), and 1348–1358 (VSRTPSRQNSA). Ser-1333 carries the post-translational modification Phosphoserine. Positions 1383-1403 (LEEHDHDNDGGQKDSNSKTSS) are enriched in basic and acidic residues.

The protein belongs to the eukaryotic initiation factor 4G family.

Its subcellular location is the cytoplasm. It localises to the perinuclear region. Functionally, component of the protein complex eIF4F, which is involved in the recognition of the mRNA cap, ATP-dependent unwinding of 5'-terminal secondary structure and recruitment of mRNA to the ribosome. This Schizosaccharomyces pombe (strain 972 / ATCC 24843) (Fission yeast) protein is Eukaryotic translation initiation factor 4 gamma (tif471).